A 955-amino-acid polypeptide reads, in one-letter code: Protein MEI2-like 3 (955 aa).

The interval 64-83 (IQPNGANHAGDPETPGGQAF) is disordered. RRM domains are found at residues 270–343 (RTLV…FSFP) and 355–428 (GMLV…LSQH). 2 disordered regions span residues 436–465 (RQQH…KLGT) and 897–955 (NAGD…LEQT). Residues 935-955 (DQESNSVGTANSTCRTTLEQT) are compositionally biased toward polar residues.

Its function is as follows. Probable RNA-binding protein that may play a role in growth regulation. The polypeptide is Protein MEI2-like 3 (ML3) (Oryza sativa subsp. japonica (Rice)).